Reading from the N-terminus, the 473-residue chain is GTPase Der (473 aa).

EngA-type G domains follow at residues 3–167 and 204–379; these read LTIA…GKDK and IRIA…RIWN. GTP-binding positions include 9–16, 56–60, 119–122, 210–217, 257–261, and 322–325; these read GRPNVGKS, DTAGL, NKSE, GRPNTGKS, and NKWD. The region spanning 380–464 is the KH-like domain; it reads RRISTGKLNR…PIRLSLRTSD (85 aa).

The protein belongs to the TRAFAC class TrmE-Era-EngA-EngB-Septin-like GTPase superfamily. EngA (Der) GTPase family. In terms of assembly, associates with the 50S ribosomal subunit.

GTPase that plays an essential role in the late steps of ribosome biogenesis. The polypeptide is GTPase Der (Bartonella bacilliformis (strain ATCC 35685 / KC583 / Herrer 020/F12,63)).